Consider the following 272-residue polypeptide: Short-chain dehydrogenase/reductase iacC (272 aa).

The NADP(+) site is built by isoleucine 13, aspartate 59, and asparagine 88. Active-site proton donor residues include serine 150 and tyrosine 169. Residues tyrosine 169, lysine 173, and valine 202 each coordinate NADP(+). The active-site Lowers pKa of active site Tyr is the lysine 173.

The protein belongs to the short-chain dehydrogenases/reductases (SDR) family.

The protein operates within secondary metabolite biosynthesis. In terms of biological role, short-chain dehydrogenase/reductase; part of the gene cluster that mediates the biosynthesis of iso-A82775C, a enylepoxycyclohexane and biosynthetic precursor of the chloropestolide anticancer natural products. Within the cluster, the prenyltransferase iacE prenylates siccayne to generate pestalodiol E, using dimethylallyl diphosphate (DMAPP) as cosubstrate. The probable oxidoreductase iacF is then involved in the epoxidation of pestalodiol F to pestalodiol F, which is further converted to pestalofone A by the short-chain dehydrogenase/reductase iacG. Iso-A82775C is subsequently generated from pestalofone A by the short-chain dehydrogenase/reductase iacC. Iso-A82775C is further condensed with maldoxin via a Diels-Alder reaction to produce the anticancer natural products chloropestolides A to E. This is Short-chain dehydrogenase/reductase iacC from Pestalotiopsis fici (strain W106-1 / CGMCC3.15140).